A 380-amino-acid polypeptide reads, in one-letter code: Cytochrome b (380 aa).

4 helical membrane-spanning segments follow: residues 33 to 53 (FGSL…FLAM), 77 to 98 (WLIR…YLHI), 113 to 133 (WNIG…GYVL), and 178 to 198 (FFAF…LHLL). Residues H83 and H97 each contribute to the heme b site. Residues H182 and H196 each coordinate heme b. H201 is a binding site for a ubiquinone. The next 4 helical transmembrane spans lie at 226–246 (YKDL…ALFT), 288–308 (LGGV…PILH), 320–340 (VTQF…WIGG), and 347–367 (YIII…LIMP).

The protein belongs to the cytochrome b family. The cytochrome bc1 complex contains 3 respiratory subunits (MT-CYB, CYC1 and UQCRFS1), 2 core proteins (UQCRC1 and UQCRC2) and probably 6 low-molecular weight proteins. Heme b is required as a cofactor.

The protein localises to the mitochondrion inner membrane. Component of the ubiquinol-cytochrome c reductase complex (complex III or cytochrome b-c1 complex) that is part of the mitochondrial respiratory chain. The b-c1 complex mediates electron transfer from ubiquinol to cytochrome c. Contributes to the generation of a proton gradient across the mitochondrial membrane that is then used for ATP synthesis. The polypeptide is Cytochrome b (mt-cyb) (Pagrus major (Red sea bream)).